The following is a 592-amino-acid chain: Malic enzyme, hydrogenosomal (592 aa).

The transit peptide at 1-27 (MLAPIQTIARPVSSILPATGALAAKRT) directs the protein to the hydrogenosome. Tyrosine 134 acts as the Proton donor in catalysis. 182-205 (VTDGSRILGLGDLGAGGMQIPIGK) provides a ligand contact to NADP(+). Arginine 187 is a binding site for NAD(+). Catalysis depends on lysine 205, which acts as the Proton acceptor. Residues glutamate 276, aspartate 277, and aspartate 300 each contribute to the a divalent metal cation site. An NAD(+)-binding site is contributed by aspartate 300. 335–352 (GAGSSGVGVCETIVDCIV) provides a ligand contact to NADP(+). Residue asparagine 443 participates in NAD(+) binding.

This sequence belongs to the malic enzymes family. The cofactor is Mg(2+). Requires Mn(2+) as cofactor.

Its subcellular location is the hydrogenosome. The enzyme catalyses (S)-malate + NADP(+) = pyruvate + CO2 + NADPH. It catalyses the reaction oxaloacetate + H(+) = pyruvate + CO2. This chain is Malic enzyme, hydrogenosomal, found in Neocallimastix frontalis (Rumen fungus).